The chain runs to 1748 residues: MARAWQHPFLNVFRHFRVDEWKRSAKQGDVAVVTDKTLKGAVYRIRGSVSAANYIQLPKSSTQSLGLTGRYLYVLFRPLPSKHFVIHLDVSSKDNQVIRVSFSNLFKEFKSTATWLQFPLVLEARTPQRDLVGLAPSGARWTCLQLDLQDVLLVYLNRCYGHLKSIRLCASLLVRNLYTSDLCFEPAISGAQWAKLPVTPMPREMAFPVPKGESWHDRYIHVRFPSESLKVPSKPIEKSCSPPEAVLLGPGPQPLPCPVASSKPVRFSVSPVVQTPSPTASGRAALAPRPFPEVSLSQERSDASNADGPGFHSLEPWAQLEASDIHTAAAGTHVLTHESAEVPVARTGSCEGFLPDPVLRLKGVIGFGGHGTRQALWTPDGAAVVYPCHAVIVVLLVDTGEQRFFLGHTDKVSALALDGSSSLLASAQARAPSVMRLWDFQTGRCLCLFRSPMHVVCSLSFSDSGALLCGVGKDHHGRTMVVAWGTGQVGLGGEVVVLAKAHTDFDVQAFRVTFFDETRMASCGQGSVRLWRLRGGVLRSCPVDLGEHHALQFTDLAFKQARDGCPEPSAAMLFVCSRSGHILEIDCQRMVVRHARRLLPTRTPGGPHPQKQTFSSGPGIAISSLSVSPAMCAVGSEDGFLRLWPLDFSSVLLEAEHEGPVSSVCVSPDGLRVLSATSSGHLGFLDTLSRVYHMLARSHTAPVLALAMEQRRGQLATVSQDRTVRIWDLATLQQLYDFTSSEDAPCAVTFHPTRPTFFCGFSSGAVRSFSLEAAEVLVEHTCHRGAVTGLTATPDGRLLFSSCSQGSLAQYSCADPQWHVLRVAADMVCPDAPASPSALAVSRDGRLLAFVGPSRCTVTVMGSASLDELLRVDIGTLDLASSRLDSAMAVCFGPAALGHLLVSTSSNRVVVLDAVSGRIIRELPGVHPEPCPSLTLSEDARFLLIAAGRTIKVWDYATQASPGPQVYIGHSEPVQAVAFSPDQQQVLSAGDAVFLWDVLAPTESDQSFPGAPPACKTGPGAGPLEDAASRASELPRQQVPKPCQASPPRLGVCARPPEGGDGARDTRNSGAPRTTYLASCKAFTPARVSCSPHSAKGTCPPPASGGWLRLKAVVGYSGNGRANMVWRPDTGFFAYTCGRLVVVEDLHSGAQQHWSGHSAEISTLALSHSAQVLASASGRSSTTAHCQIRVWDVSGGLCQHLIFPHSTTVLALAFSPDDRLLVTLGDHDGRTLALWGTATYDLVSSTRLPEPVHGVAFNPWDAGELTCVGQGTVTFWLLQQRGADISLQVRREPVPEAVGAGELTSLCYGAPPLLYCGTSSGQVCVWDTRAGRCFLSWEADDGGIGLLLFSGSRLVSGSSTGRLRLWAVGAVSELRCKGSGASSVFMEHELVLDGAVVSASFDDSVDMGVVGTTAGTLWFVSWAEGTSTRLISGHRSKVNEVVFSPGESHCATCSEDGSVRVWALASMELVIQFQVLNQSCLCLAWSPPCCGRPEQQRLAAGYGDGSLRIFSVSRTAMELKMHPHPVALTTVAFSTDGQTVLSGDKDGLVAVSHPCTGTTFRVLSDHQGAPISTICVTCKECEDLGVEGTDLWLAASGDQRVSVWASDWLRNHCELVDWLSFPMPATTETQGHLPPSLAAFCPWDGALLMYVGPGVYKEVIIYNLCQKQVVEKIPLPFFAMSLSLSPGTHLLAVGFAECMLRLVDCAMGTAQDFAGHDNAVHLCRFTPSARLLFTAARNEILVWEVPGL.

Positions 1–207 are binds with microtubules; it reads MARAWQHPFL…VTPMPREMAF (207 aa). Phosphoserine is present on Ser241. The interval 274–308 is disordered; it reads QTPSPTASGRAALAPRPFPEVSLSQERSDASNADG. WD repeat units follow at residues 407 to 450, 452 to 494, 501 to 541, 615 to 654, 656 to 695, 698 to 737, 740 to 779, 782 to 821, 882 to 922, 926 to 964, 969 to 1009, 1156 to 1201, 1204 to 1245, 1247 to 1286, 1298 to 1326, 1327 to 1376, 1433 to 1472, 1475 to 1520, 1523 to 1562, 1568 to 1614, and 1715 to 1748; these read GHTD…CLFR, PMHV…LGGE, AHTD…LRSC, SSGP…VLLE, EHEG…YHML, SHTA…QLYD, SSED…VLVE, CHRG…WHVL, SRLD…IIRE, VHPE…SPGP, GHSE…QSFP, GHSA…CQHL, PHST…LVSS, RLPE…ADIS, VGAG…VCVW, DTRA…ELRC, GHRS…LVIQ, VLNQ…MELK, PHPV…TFRV, GAPI…NHCE, and GHDN…VPGL. The disordered stretch occupies residues 1004–1071; that stretch reads SDQSFPGAPP…GARDTRNSGA (68 aa).

This sequence belongs to the WD repeat WDR90/POC16 family.

The protein localises to the cytoplasm. It localises to the cytoskeleton. Its subcellular location is the microtubule organizing center. It is found in the centrosome. The protein resides in the centriole. The protein localises to the centriolar satellite. Microtubule-binding protein that plays a crucial role in ensuring inner core protein localization within the centriole core, as well as in maintaining the microtubule wall integrity and the overall centriole roundness and stability. Required for efficient primary cilium formation. The polypeptide is WD repeat-containing protein 90 (WDR90) (Homo sapiens (Human)).